The following is an 874-amino-acid chain: MKTSELRQKFLKFFETKGHTVVRSSSLVPHDDPTLLFTNAGMNQFKDVFLGFDKRPYSRATTAQKCVRAGGKHNDLENVGYTARHHTFFEMMGNFSFGDYFKRDAIHFAWEFLTSPEWLNIPKDKLLATVYAEDDEAYNIWLNEIGMPSERIVRIGDNKGAKYASDNFWQMGDTGPCGPCSEIFYDHGEEIWGGIPGSPEEDGDRWIEIWNCVFMQFNRDEQGNMNPLPKPSVDTGMGLERMAAVMQHVHSNYEIDLFQDLLKAVARETGAAFSMEEPSLKVIADHIRSCSFLIADGVLPSNEGRGYVLRRIIRRAVRHGYKLGQSKPFFHKLVADLVKEMGDAYPELKEKQVQIEEALKNEESRFAQTLETGMALLENALAKGSKKLDGEIIFKLYDTYGFPYDLTADICRERNIELDEAGFEREMEAQRARARAAQSFKANAQLPYDGQDTEFKGYSERQTESKVLALYKDGEQVDELNEGDSGAVVIDFTPFYAESGGQVGDVGYIFSGENRFEVRDTQKIKAAVFGQFGVQTSGRLKVGDSVTAKVDDEIRNANMRNHSATHLMHKALRDVLGRHVEQKGSLVTAESTRFDISHPQAVTAEEIAEVERRVNEAVLANVAVNAAIMSMEDAQKTGAMMLFGEKYGDEVRVLQMGGFSTELCGGTHVSRTGDIGLFKIISEGGIAAGVRRIEAITGLNALKWAQEQERLVKDIIAETKAQTEKDVLAKIQAGAAHAKALEKELARAKAELAVHAGAKLLDDAKDLGAAKLVAAQIEADAAALREIVTDLTGKSDNAVILLAAVNDGKVSLCAGVSKALTGKVKAGDLVKFAAEQVGGKGGGRPDLAQAGGTDAGKLPAVLDSVKDWVGAKLV.

Residues H562, H566, C664, and H668 each coordinate Zn(2+).

It belongs to the class-II aminoacyl-tRNA synthetase family. It depends on Zn(2+) as a cofactor.

It localises to the cytoplasm. It catalyses the reaction tRNA(Ala) + L-alanine + ATP = L-alanyl-tRNA(Ala) + AMP + diphosphate. Functionally, catalyzes the attachment of alanine to tRNA(Ala) in a two-step reaction: alanine is first activated by ATP to form Ala-AMP and then transferred to the acceptor end of tRNA(Ala). Also edits incorrectly charged Ser-tRNA(Ala) and Gly-tRNA(Ala) via its editing domain. The chain is Alanine--tRNA ligase from Neisseria meningitidis serogroup C / serotype 2a (strain ATCC 700532 / DSM 15464 / FAM18).